The following is a 240-amino-acid chain: Homeobox protein DLX-4 (240 aa).

2 disordered regions span residues 44–70 and 175–194; these read DLSY…DSYL and LKQS…PSLS. A DNA-binding region (homeobox) is located at residues 116–175; it reads LRKPRTIYSSLQLQHLNQRFQHTQYLALPERAQLAAQLGLTQTQVKIWFQNKRSKYKKLL.

Belongs to the distal-less homeobox family. As to expression, branchial arches, molar and incisor teeth and limbs.

It localises to the nucleus. Its function is as follows. May play a role in determining the production of hemoglobin S. May act as a repressor. During embryonic development, plays a role in palatogenesis. The protein is Homeobox protein DLX-4 (Dlx4) of Mus musculus (Mouse).